A 402-amino-acid polypeptide reads, in one-letter code: CCA-adding enzyme (402 aa).

Residues Gly32 and Arg35 each contribute to the ATP site. CTP-binding residues include Gly32 and Arg35. The Mg(2+) site is built by Asp45 and Asp47. Positions 116, 159, 162, 165, and 168 each coordinate ATP. CTP contacts are provided by Arg116, Asp159, Arg162, Arg165, and Arg168.

This sequence belongs to the tRNA nucleotidyltransferase/poly(A) polymerase family. Bacterial CCA-adding enzyme type 3 subfamily. Homodimer. Requires Mg(2+) as cofactor.

It catalyses the reaction a tRNA precursor + 2 CTP + ATP = a tRNA with a 3' CCA end + 3 diphosphate. It carries out the reaction a tRNA with a 3' CCA end + 2 CTP + ATP = a tRNA with a 3' CCACCA end + 3 diphosphate. Functionally, catalyzes the addition and repair of the essential 3'-terminal CCA sequence in tRNAs without using a nucleic acid template. Adds these three nucleotides in the order of C, C, and A to the tRNA nucleotide-73, using CTP and ATP as substrates and producing inorganic pyrophosphate. tRNA 3'-terminal CCA addition is required both for tRNA processing and repair. Also involved in tRNA surveillance by mediating tandem CCA addition to generate a CCACCA at the 3' terminus of unstable tRNAs. While stable tRNAs receive only 3'-terminal CCA, unstable tRNAs are marked with CCACCA and rapidly degraded. The polypeptide is CCA-adding enzyme (Streptococcus thermophilus (strain CNRZ 1066)).